Consider the following 552-residue polypeptide: Putative E3 ubiquitin-protein ligase ARI6 (552 aa).

Residues 129–343 (REFTCGICFE…GGYYACNRYE (215 aa)) are TRIAD supradomain. Zn(2+) contacts are provided by Cys133, Cys136, Cys150, His152, Cys155, Cys158, Cys178, Cys183, Cys222, Cys227, Cys245, Cys247, Cys252, Cys255, His260, Cys265, Cys292, and Cys295. The RING-type 1 zinc finger occupies 133-183 (CGICFESYPLEETISVSCGHPFCATCWTGYISTSINDGPGCLMLKCPYPCC). The IBR-type zinc-finger motif lies at 202 to 265 (ERYYRYFLRS…SEEAHRPVDC (64 aa)). The RING-type 2; atypical zinc-finger motif lies at 292–322 (CPKCKRPIEKNHGCMHMTCTPPCKFEFCWLC). Cys305 is an active-site residue. Residues Cys310, Cys314, Cys319, Cys322, His329, and Cys339 each coordinate Zn(2+). The segment at 518–552 (HAASSKPANCKPSSNTKDGGKGKKEALTMAGSAET) is disordered. Residues 519-534 (AASSKPANCKPSSNTK) are compositionally biased toward polar residues.

It belongs to the RBR family. Ariadne subfamily. It depends on Zn(2+) as a cofactor.

The catalysed reaction is [E2 ubiquitin-conjugating enzyme]-S-ubiquitinyl-L-cysteine + [acceptor protein]-L-lysine = [E2 ubiquitin-conjugating enzyme]-L-cysteine + [acceptor protein]-N(6)-ubiquitinyl-L-lysine.. The protein operates within protein modification; protein ubiquitination. Might act as an E3 ubiquitin-protein ligase, or as part of E3 complex, which accepts ubiquitin from specific E2 ubiquitin-conjugating enzymes and then transfers it to substrates. The sequence is that of Putative E3 ubiquitin-protein ligase ARI6 (ARI6) from Arabidopsis thaliana (Mouse-ear cress).